Here is a 130-residue protein sequence, read N- to C-terminus: MAKVQYFGTGRRKKSVARVILVPGDGKVTINKRDIEVYFGLETLRYIVNQPLVLTGTKDKFDVIVNVNGGGFTGQAGAIRHGITRALVKADETLKPELKKAGFLTRDPRMKERKKYGLKKARRAPQFSKR.

The disordered stretch occupies residues 102–130 (GFLTRDPRMKERKKYGLKKARRAPQFSKR). Residues 111–130 (KERKKYGLKKARRAPQFSKR) show a composition bias toward basic residues.

It belongs to the universal ribosomal protein uS9 family.

The sequence is that of Small ribosomal subunit protein uS9 from Clostridium novyi (strain NT).